The following is a 211-amino-acid chain: Protein-L-isoaspartate O-methyltransferase (211 aa).

Ser62 is a catalytic residue.

This sequence belongs to the methyltransferase superfamily. L-isoaspartyl/D-aspartyl protein methyltransferase family.

The protein resides in the cytoplasm. It carries out the reaction [protein]-L-isoaspartate + S-adenosyl-L-methionine = [protein]-L-isoaspartate alpha-methyl ester + S-adenosyl-L-homocysteine. Functionally, catalyzes the methyl esterification of L-isoaspartyl residues in peptides and proteins that result from spontaneous decomposition of normal L-aspartyl and L-asparaginyl residues. It plays a role in the repair and/or degradation of damaged proteins. This is Protein-L-isoaspartate O-methyltransferase from Shewanella oneidensis (strain ATCC 700550 / JCM 31522 / CIP 106686 / LMG 19005 / NCIMB 14063 / MR-1).